The primary structure comprises 182 residues: Large ribosomal subunit protein uL5 (182 aa).

In terms of assembly, part of the 50S ribosomal subunit; part of the 5S rRNA/uL5/uL18/bL25 (TL7) subcomplex; has also been isolated as a complex with 5S rRNA, bL25 (TL7) and DNA binding protein II. Forms a bridge to the 30S subunit in the 70S ribosome, contacting protein uS13; this bridge is straddled by the 5S rRNA. Contacts the P site tRNA.

This is one of the proteins that bind and probably mediate the attachment of the 5S RNA into the large ribosomal subunit, where it forms part of the central protuberance. In the 70S ribosome it contacts protein S13 of the 30S subunit (forming bridge B1b) connecting the head of the 30S subunit to the top of the 50S subunit. The bridge itself contacts the P site tRNA and is implicated in movement during ribosome translocation. Also contacts the P site tRNA independently of the intersubunit bridge; the 5S rRNA and some of its associated proteins might help stabilize positioning of ribosome-bound tRNAs. This Thermus thermophilus (strain ATCC 27634 / DSM 579 / HB8) protein is Large ribosomal subunit protein uL5 (rplE).